The chain runs to 303 residues: NmrA-like family domain-containing oxidoreductase FVEG_08287 (303 aa).

NADP(+)-binding positions include 8–13, 8–14, 36–39, R37, 56–57, 77–79, and 159–162; these read LGAGEL, LGAGELG, LRPS, QG, IFR, and FMSF.

It belongs to the NmrA-type oxidoreductase family.

Its function is as follows. NmrA-like family domain-containing oxidoreductase; part of the Fusarium detoxification of benzoxazolinone cluster 1 (FDB1) involved in the degradation of benzoxazolinones produced by the host plant. Maize, wheat, and rye produce the 2 benzoxazinone phytoanticipins 2,4-dihy-droxy-7-methoxy-1,4-benzoxazin-3-one (DIMBOA) and 2,4-dihydroxy-1,4-benzoxazin-3-one (DIBOA) that, due to their inherent instability once released, spontaneously degrade to the more stable corresponding benzoxazolinones, 6-methoxy-2-benzoxazolinone (MBOA) and 2-benzoxazolinone (BOA), respectively. The first step in the detoxification of benzoxazolinones involves the hydrolysis of the cyclic ester bond of benzoxazolinones by the FDB1 cluster gamma-lactamase MBL1 to aminophenols. MBL1 is able to convert BOA into 2-aminophenol (2-AP), as well as MBOA into 5-methoxy-2-aminophenol (2-AMP). The FDB2 cluster N-malonyltransferase FDB2/NAT1 then metabolizes aminophenols via N-malonylation to non-toxic malonamic acids. FDB2/NAT1 converts 2-AP into N-(2-hydroxyphenyl) malonamic acid (HPMA) and 2-AMP into N-(2-hydroxy-4-methoxyphenyl) malonamic acid (HMPMA). The duplicated dienlactone hydrolases DLH1 and DLH2 may provide redundant function for hydrolyzing the lactone moiety in the BOA molecule. The roles of the amidases an other enzymes encoded by the 2 FDB clusters have not been identified so far. This Gibberella moniliformis (strain M3125 / FGSC 7600) (Maize ear and stalk rot fungus) protein is NmrA-like family domain-containing oxidoreductase FVEG_08287.